Reading from the N-terminus, the 91-residue chain is Small ribosomal subunit protein uS17 (91 aa).

This sequence belongs to the universal ribosomal protein uS17 family. Part of the 30S ribosomal subunit.

In terms of biological role, one of the primary rRNA binding proteins, it binds specifically to the 5'-end of 16S ribosomal RNA. The chain is Small ribosomal subunit protein uS17 from Malacoplasma penetrans (strain HF-2) (Mycoplasma penetrans).